The chain runs to 238 residues: Cysteine-rich venom protein 2 (238 aa).

Residues 1-19 form the signal peptide; sequence MIAFIVLLSLAAVLQQSSG. Positions 38–164 constitute an SCP domain; the sequence is VDKHNALRRS…STKYLYVCQY (127 aa). Intrachain disulfides connect Cys75–Cys153, Cys92–Cys165, Cys148–Cys162, Cys184–Cys191, Cys187–Cys196, Cys200–Cys233, Cys209–Cys227, and Cys218–Cys231. In terms of domain architecture, ShKT spans 200 to 233; it reads CEYEDAYTNCNDLVKERKCQTEWIKSQCPATCFC.

This sequence belongs to the CRISP family. In terms of tissue distribution, expressed by the venom gland.

It is found in the secreted. Its function is as follows. Blocks contraction of smooth muscle elicited by high potassium-induced depolarization, but does not block caffeine-stimulated contraction. May target voltage-gated calcium channels (Cav) on smooth muscle. The sequence is that of Cysteine-rich venom protein 2 from Hydrophis hardwickii (Hardwick's spine-bellied seasnake).